Here is a 1003-residue protein sequence, read N- to C-terminus: Cation-transporting ATPase HMA5 (1003 aa).

The segment at 6–25 is disordered; it reads LSAVAGGGRPAAAGGGGDEM. Over residues 10 to 22 the composition is skewed to gly residues; that stretch reads AGGGRPAAAGGGG. 3 consecutive HMA domains span residues 51–117, 133–199, and 207–273; these read EEAH…FDAE, LSAQ…FEAA, and DKIL…NGRL. Residues C62, C65, C144, and C147 each coordinate Cu cation. 8 helical membrane-spanning segments follow: residues 302–322, 331–351, 372–392, 396–416, 562–582, 599–619, 938–958, and 966–986; these read SLFLSIPVFFIRMVCPHIPFI, GPFHMGDLLKWILVSIVQFVV, VLVVLGTTASYVYSVCALLYG, GFHPPIYFETSAMIITFVLFG, IFVPIVITLSMITFLVWFLCG, FVFSLMFAIAVVVIACPCALG, FFAMAYNVVAIPVAAGALFPF, and WLAGACMAFSSVSVVCSSLLL.

It belongs to the cation transport ATPase (P-type) (TC 3.A.3) family. Type IB subfamily. As to expression, expressed in root vascular cylinder, vascular bundles and mesophyll cells of leaf blades, and anther walls and microspores of stamens.

Its subcellular location is the cell membrane. Its function is as follows. Metal efflux transporter that may play a role in detoxification of heavy metals, such as zinc, copper, lead and cadmium, especially in the shoots. In Oryza sativa subsp. japonica (Rice), this protein is Cation-transporting ATPase HMA5.